We begin with the raw amino-acid sequence, 138 residues long: Gastrula zinc finger protein XlCGF44.2 (138 aa).

5 consecutive C2H2-type zinc fingers follow at residues 5 to 27 (FACT…KRIH), 32 to 54 (FVCA…QRLH), 60 to 82 (FTCT…QQIH), 88 to 110 (YVCS…MKTH), and 116 to 138 (FACS…QESH).

This sequence belongs to the krueppel C2H2-type zinc-finger protein family.

The protein localises to the nucleus. In terms of biological role, may be involved in transcriptional regulation. The polypeptide is Gastrula zinc finger protein XlCGF44.2 (Xenopus laevis (African clawed frog)).